The following is a 554-amino-acid chain: Asparagine synthetase B [glutamine-hydrolyzing] (554 aa).

Catalysis depends on Cys2, which acts as the For GATase activity. Residues 2 to 186 (CSIFGVFDIK…AGSYLWSQDG (185 aa)) form the Glutamine amidotransferase type-2 domain. Residues 50 to 54 (RLSIV), 75 to 77 (NGE), and Asp99 contribute to the L-glutamine site. Residues Leu233, Val273, and 347 to 348 (SG) each bind ATP.

The protein belongs to the asparagine synthetase family. In terms of assembly, homodimer.

The catalysed reaction is L-aspartate + L-glutamine + ATP + H2O = L-asparagine + L-glutamate + AMP + diphosphate + H(+). It functions in the pathway amino-acid biosynthesis; L-asparagine biosynthesis; L-asparagine from L-aspartate (L-Gln route): step 1/1. With respect to regulation, glutamine-dependent asparagine synthesis activity can be inhibited by aspartic acid analogs (such as a sulfinate derivative and (2S,3R)-2-amino-3-methylsuccinate) in vitro; the inhibition is competitive with respect to aspartate. Functionally, catalyzes the ATP-dependent conversion of aspartate into asparagine, using glutamine as a source of nitrogen. Can also use ammonia as the nitrogen source in vitro, albeit with lower efficiency. As nucleotide substrates, ATP and dATP are utilized at a similar rate in both the glutamine- and ammonia-dependent reactions, whereas GTP utilization is only 15% that of ATP, and CTP, UTP, ITP and XTP are very poor or not substrates. Also exhibits glutaminase activity. In Escherichia coli (strain K12), this protein is Asparagine synthetase B [glutamine-hydrolyzing] (asnB).